Consider the following 172-residue polypeptide: Light-harvesting complex-like protein OHP2, chloroplastic (172 aa).

The N-terminal 43 residues, 1 to 43, are a transit peptide targeting the chloroplast; it reads MSVASPIQCIRILNPSSSSSSSTASSSFRFSTTTKPCVFIIRC. At 44–135 the chain is on the stromal side; it reads SQTEGPLRRP…QPKNEISNGR (92 aa). The tract at residues 45–90 is disordered; it reads QTEGPLRRPSAPPTLREPQKPVPPSQPSSSPPPSPPPQKAVAVDGK. The segment covering 64 to 82 has biased composition (pro residues); that stretch reads KPVPPSQPSSSPPPSPPPQ. Residues 136–156 traverse the membrane as a helical segment; the sequence is WAMFGFAVGMLTEYATGSDLV. The Lumenal portion of the chain corresponds to 157–172; the sequence is DQVKILLSNFGILDLE.

It belongs to the ELIP/psbS family. Component of a high molecular weight complex containing OHP1, OHP2 and HCF244, and PSII core proteins D1/D2, HCF136 and HCF173. Forms a trimeric complex with OHP1 and HCF244 that mutually stabilizes each subunit.

Its subcellular location is the plastid. It is found in the chloroplast thylakoid membrane. May play a photoprotective role within PSI in response to light stress. Forms a trimeric complex with OHP1 and HCF244 that is required to promote PSII core subunit assembly. The trimeric complex forms a transient PSII reaction center-like complex with PsbA, PsbD, PsbE, PsbF and PsbI subunits in thylakoids for early assembly of PSII as well as PSII repair. The trimeric complex is required for the recruitment of ribosomes to the psbA mRNA during PSII biogenesis and repair. Forms a heterodimer with OHP1 that binds chlorophylls and carotenoids, and that may function in the delivery of pigments to the PsbA subunit of PSII. In Arabidopsis thaliana (Mouse-ear cress), this protein is Light-harvesting complex-like protein OHP2, chloroplastic.